The sequence spans 348 residues: Protein pelota homolog (348 aa).

It belongs to the eukaryotic release factor 1 family. Pelota subfamily. As to quaternary structure, monomer. The cofactor is a divalent metal cation.

The protein localises to the cytoplasm. Functionally, may function in recognizing stalled ribosomes, interact with stem-loop structures in stalled mRNA molecules, and effect endonucleolytic cleavage of the mRNA. May play a role in the release non-functional ribosomes and degradation of damaged mRNAs. Has endoribonuclease activity. This is Protein pelota homolog from Methanococcus vannielii (strain ATCC 35089 / DSM 1224 / JCM 13029 / OCM 148 / SB).